We begin with the raw amino-acid sequence, 374 residues long: MTDHSNTRVVVGMSGGVDSSVVALLLKQQGYDVVGVFMKNWDDTDENGVCTATEDYKDVAKVADKIGIPYYSINFEKEYWDRVFTYFLDEYKKGRTPNPDVICNKEIKFKAFLDYAMDLGADYIATGHYARLQHDEDGTMHLLRGVDSNKDQTYFLSQLDSKTLQKVMFPLGEMVKPDVRKLALNAGLATAKKKDSVGICFIGEKNFKEFLGHYLPATPGKMMTFDGQVKGEHAGLMYYTIGQRRGLGIGGDGEDNEPWFVVGKDLKKNILYVGKGYHNPHLYATHLKASDLHFVTDEDLGNDFHVTAKFRYRQKDSGVTVHFNDDHTEVTVTFDDPVRAITPGQAVVFYNGEECLGSGMIDAAYNDERVLQYV.

Residues 12–19 (GMSGGVDS) and Met-38 contribute to the ATP site. The interaction with target base in tRNA stretch occupies residues 98-100 (NPD). Residue Cys-103 is the Nucleophile of the active site. A disulfide bond links Cys-103 and Cys-200. Gly-127 contributes to the ATP binding site. An interaction with tRNA region spans residues 150–152 (KDQ). The Cysteine persulfide intermediate role is filled by Cys-200. The interval 311–312 (RY) is interaction with tRNA.

It belongs to the MnmA/TRMU family.

The protein resides in the cytoplasm. The enzyme catalyses S-sulfanyl-L-cysteinyl-[protein] + uridine(34) in tRNA + AH2 + ATP = 2-thiouridine(34) in tRNA + L-cysteinyl-[protein] + A + AMP + diphosphate + H(+). In terms of biological role, catalyzes the 2-thiolation of uridine at the wobble position (U34) of tRNA, leading to the formation of s(2)U34. The polypeptide is tRNA-specific 2-thiouridylase MnmA (Lactiplantibacillus plantarum (strain ATCC BAA-793 / NCIMB 8826 / WCFS1) (Lactobacillus plantarum)).